The primary structure comprises 335 residues: D-arabinose 1-dehydrogenase (335 aa).

Residue tyrosine 58 is the Proton donor of the active site. Histidine 124 lines the substrate pocket. An NAD(+)-binding site is contributed by 221–287; sequence SLLRSQETRQ…VSSMEELKLA (67 aa).

The protein belongs to the aldo/keto reductase family. Aldo/keto reductase 2 subfamily.

The catalysed reaction is D-arabinose + NAD(+) = D-arabinono-1,4-lactone + NADH + H(+). The polypeptide is D-arabinose 1-dehydrogenase (ARA2) (Saccharomyces cerevisiae (strain ATCC 204508 / S288c) (Baker's yeast)).